The sequence spans 189 residues: Protein GrpE (189 aa).

Basic and acidic residues predominate over residues 1-38; it reads MTKSNETERMEESEETHSSDIRSASESDHASGSDHTES. The interval 1-54 is disordered; it reads MTKSNETERMEESEETHSSDIRSASESDHASGSDHTESADEIPTADAEQGELEQ.

Belongs to the GrpE family. As to quaternary structure, homodimer.

The protein resides in the cytoplasm. Its function is as follows. Participates actively in the response to hyperosmotic and heat shock by preventing the aggregation of stress-denatured proteins, in association with DnaK and GrpE. It is the nucleotide exchange factor for DnaK and may function as a thermosensor. Unfolded proteins bind initially to DnaJ; upon interaction with the DnaJ-bound protein, DnaK hydrolyzes its bound ATP, resulting in the formation of a stable complex. GrpE releases ADP from DnaK; ATP binding to DnaK triggers the release of the substrate protein, thus completing the reaction cycle. Several rounds of ATP-dependent interactions between DnaJ, DnaK and GrpE are required for fully efficient folding. In Tropheryma whipplei (strain Twist) (Whipple's bacillus), this protein is Protein GrpE.